Here is a 492-residue protein sequence, read N- to C-terminus: Homoserine O-acetyltransferase (492 aa).

Residues 47-352 (NAILVFHALS…KSIYGHDAFL (306 aa)) enclose the AB hydrolase-1 domain. The active-site Nucleophile is serine 152. Arginine 221 is a binding site for substrate. Catalysis depends on residues aspartate 315 and histidine 348. Residue aspartate 349 participates in substrate binding. CBS domains are found at residues 375–431 (MTKN…ENSI) and 440–492 (MTKN…TITI).

It belongs to the AB hydrolase superfamily. MetX family. As to quaternary structure, homodimer.

It is found in the cytoplasm. It carries out the reaction L-homoserine + acetyl-CoA = O-acetyl-L-homoserine + CoA. It participates in amino-acid biosynthesis; L-methionine biosynthesis via de novo pathway; O-acetyl-L-homoserine from L-homoserine: step 1/1. Transfers an acetyl group from acetyl-CoA to L-homoserine, forming acetyl-L-homoserine. This is Homoserine O-acetyltransferase from Methanococcus vannielii (strain ATCC 35089 / DSM 1224 / JCM 13029 / OCM 148 / SB).